The chain runs to 319 residues: Telomere-binding protein cav (319 aa).

The required for binding to Su(var)205 stretch occupies residues Arg-107–Glu-312. Disordered stretches follow at residues Trp-141–Val-163 and Pro-186–Tyr-248. 2 short sequence motifs (su(var)205-binding Pro-containing repeat) span residues Pro-220–Met-224 and Pro-273–Glu-279. Residues Ser-291–Ser-311 show a composition bias toward polar residues. The tract at residues Ser-291–Asn-319 is disordered.

Interacts (via C-terminus) with Su(var)205 dimer (via hinge and chromoshadow domain) and with moi to form the terminin, telomere-capping, complex. Interacts with HP6, which is also part of the terminin complex.

Its subcellular location is the nucleus. The protein resides in the chromosome. It localises to the telomere. Binds to chromosome ends in a sequence-dependent manner and is required for telomere capping. The chain is Telomere-binding protein cav from Drosophila yakuba (Fruit fly).